The following is a 328-amino-acid chain: GMP reductase (328 aa).

Residue cysteine 177 is the Thioimidate intermediate of the active site. 206–229 (IVADGGIRYNGDIAKSIRFGASMV) provides a ligand contact to NADP(+).

The protein belongs to the IMPDH/GMPR family. GuaC type 2 subfamily.

The catalysed reaction is IMP + NH4(+) + NADP(+) = GMP + NADPH + 2 H(+). Catalyzes the irreversible NADPH-dependent deamination of GMP to IMP. It functions in the conversion of nucleobase, nucleoside and nucleotide derivatives of G to A nucleotides, and in maintaining the intracellular balance of A and G nucleotides. In Levilactobacillus brevis (strain ATCC 367 / BCRC 12310 / CIP 105137 / JCM 1170 / LMG 11437 / NCIMB 947 / NCTC 947) (Lactobacillus brevis), this protein is GMP reductase.